Consider the following 162-residue polypeptide: Nucleotide-binding protein A2cp1_0112 (162 aa).

It belongs to the YajQ family.

Nucleotide-binding protein. The protein is Nucleotide-binding protein A2cp1_0112 of Anaeromyxobacter dehalogenans (strain 2CP-1 / ATCC BAA-258).